The primary structure comprises 193 residues: Interleukin-18 (193 aa).

A propeptide spanning residues 1 to 36 (MAAEQVEDNCISFVEMKFINNTLYFVAENDEDLESD) is cleaved from the precursor.

The protein belongs to the IL-1 family. As to quaternary structure, forms a ternary complex with ligand-binding receptor subunit IL18R1 and signaling receptor subunit IL18RAP at the plasma membrane. Mature IL18 first binds to IL18R1 forming a low affinity binary complex, which then interacts with IL18RAP to form a high affinity ternary complex that signals inside the cell. Interacts with cargo receptor TMED10; the interaction mediates the translocation from the cytoplasm into the ERGIC (endoplasmic reticulum-Golgi intermediate compartment) and thereby secretion. The pro-IL-18 precursor is processed by CASP1, CASP4 or CASP5 to yield its mature, active form. The pro-IL-18 precursor features autoinhibitory interactions between the propeptide and the post-cleavage-site region, preventing recognition by the IL18R1 receptor. Processing by CASP1, CASP4 or CASP5 induces conformational changes to generate critical receptor-binding sites. The mature form is then secreted and released in the extracellular milieu by passing through the gasdermin-D (GSDMD) pore. In contrast, cleavage by CASP3 inactivates IL18.

It localises to the cytoplasm. It is found in the cytosol. The protein resides in the secreted. Functionally, pro-inflammatory cytokine primarily involved in epithelial barrier repair, polarized T-helper 1 (Th1) cell and natural killer (NK) cell immune responses. Upon binding to IL18R1 and IL18RAP, forms a signaling ternary complex which activates NF-kappa-B, triggering synthesis of inflammatory mediators. Synergizes with IL12/interleukin-12 to induce IFNG synthesis from T-helper 1 (Th1) cells and natural killer (NK) cells. Involved in transduction of inflammation downstream of pyroptosis: its mature form is specifically released in the extracellular milieu by passing through the gasdermin-D (GSDMD) pore. This Boselaphus tragocamelus (Nilgai) protein is Interleukin-18 (IL18).